The primary structure comprises 57 residues: NNMLQRQANCNLKVNGCNKIYNPICGSDGITYANECLLCLENKKRQTSILVEKSGPC.

The region spanning 4–57 (LQRQANCNLKVNGCNKIYNPICGSDGITYANECLLCLENKKRQTSILVEKSGPC) is the Kazal-like domain. Disulfide bonds link C10-C39, C17-C36, and C25-C57.

The protein localises to the secreted. Functionally, serine protease inhibitor which exhibits anti-trypsin activity. In the pancreas, protects against trypsin-catalyzed premature activation of zymogens. Its function is as follows. In the male reproductive tract, binds to sperm heads where it modulates sperm capacitance by inhibiting calcium uptake and nitrogen oxide (NO) production. The protein is Serine protease inhibitor Kazal-type 1 (SPINK1) of Canis lupus familiaris (Dog).